The sequence spans 122 residues: Double-headed protease inhibitor, submandibular gland (122 aa).

Kazal-like domains follow at residues 10–70 and 71–121; these read GGRK…NCDI and ECTQ…QCES. Cystine bridges form between Cys-16/Cys-50, Cys-28/Cys-47, Cys-36/Cys-68, Cys-72/Cys-101, Cys-79/Cys-98, and Cys-87/Cys-119.

It localises to the secreted. Functionally, this inhibitor is composed of two homologous actively inhibiting halves: one which inhibits trypsin, the other which inhibits elastase. This is Double-headed protease inhibitor, submandibular gland from Meles meles (Eurasian badger).